The following is a 139-amino-acid chain: Thioredoxin-like protein Clot (139 aa).

Positions 1–136 constitute a Thioredoxin domain; the sequence is MTVEKVDATV…LADKVDAVVN (136 aa). Residues Cys-49 and Cys-52 each act as nucleophile in the active site. Cysteines 49 and 52 form a disulfide.

This sequence belongs to the thioredoxin family.

Functionally, probable thiol-disulfide oxidoreductase that may participate in various redox reactions. This is Thioredoxin-like protein Clot from Oryza sativa subsp. japonica (Rice).